A 70-amino-acid polypeptide reads, in one-letter code: Small ribosomal subunit protein bS21B (70 aa).

This sequence belongs to the bacterial ribosomal protein bS21 family.

The protein is Small ribosomal subunit protein bS21B of Burkholderia thailandensis (strain ATCC 700388 / DSM 13276 / CCUG 48851 / CIP 106301 / E264).